We begin with the raw amino-acid sequence, 378 residues long: Chaperone protein DnaJ (378 aa).

A J domain is found at 5 to 70 (DYYEVLGLQK…EKRAMYDQYG (66 aa)). Residues 135–213 (GVKKDIRIRT…CHGDGRVEKT (79 aa)) form a CR-type zinc finger. 8 residues coordinate Zn(2+): C148, C151, C165, C168, C187, C190, C201, and C204. 4 CXXCXGXG motif repeats span residues 148 to 155 (CDTCHGSG), 165 to 172 (CPHCHGSG), 187 to 194 (CPSCHGTG), and 201 to 208 (CKSCHGDG).

Belongs to the DnaJ family. In terms of assembly, homodimer. Zn(2+) is required as a cofactor.

It is found in the cytoplasm. Functionally, participates actively in the response to hyperosmotic and heat shock by preventing the aggregation of stress-denatured proteins and by disaggregating proteins, also in an autonomous, DnaK-independent fashion. Unfolded proteins bind initially to DnaJ; upon interaction with the DnaJ-bound protein, DnaK hydrolyzes its bound ATP, resulting in the formation of a stable complex. GrpE releases ADP from DnaK; ATP binding to DnaK triggers the release of the substrate protein, thus completing the reaction cycle. Several rounds of ATP-dependent interactions between DnaJ, DnaK and GrpE are required for fully efficient folding. Also involved, together with DnaK and GrpE, in the DNA replication of plasmids through activation of initiation proteins. This Glaesserella parasuis serovar 5 (strain SH0165) (Haemophilus parasuis) protein is Chaperone protein DnaJ.